The following is a 142-amino-acid chain: MAKKVNAYIKLQVKAGQANPSPPVGPALGQHGVNIMEFCKAFNAKTQNLEPGLPTPVVITVYSDRSFTFITKTPPASVLLRKAAGIKSGSGRPNTEKVGTVNRAQLEEIANVKMPDLSAGSLDAAVRTIAGTARSMGLNVEE.

This sequence belongs to the universal ribosomal protein uL11 family. In terms of assembly, part of the ribosomal stalk of the 50S ribosomal subunit. Interacts with L10 and the large rRNA to form the base of the stalk. L10 forms an elongated spine to which L12 dimers bind in a sequential fashion forming a multimeric L10(L12)X complex. Post-translationally, one or more lysine residues are methylated.

Its function is as follows. Forms part of the ribosomal stalk which helps the ribosome interact with GTP-bound translation factors. This is Large ribosomal subunit protein uL11 from Hahella chejuensis (strain KCTC 2396).